The chain runs to 354 residues: Selenide, water dikinase (354 aa).

Residue U21 is part of the active site. A non-standard amino acid (selenocysteine) is located at residue U21. ATP contacts are provided by residues K24 and 51–53 (TSD). D54 lines the Mg(2+) pocket. ATP is bound by residues D71, D94, and 141–143 (GHT). Mg(2+) is bound at residue D94. D229 contributes to the Mg(2+) binding site.

The protein belongs to the selenophosphate synthase 1 family. Class I subfamily. As to quaternary structure, homodimer. Requires Mg(2+) as cofactor.

It carries out the reaction hydrogenselenide + ATP + H2O = selenophosphate + AMP + phosphate + 2 H(+). Synthesizes selenophosphate from selenide and ATP. The polypeptide is Selenide, water dikinase (Treponema denticola (strain ATCC 35405 / DSM 14222 / CIP 103919 / JCM 8153 / KCTC 15104)).